The primary structure comprises 407 residues: Protein arginine N-methyltransferase 2 (407 aa).

Residues 186–407 (TAADQATYLK…YYYHPEIRFA (222 aa)) enclose the RMT2 domain. S-adenosyl-L-methionine-binding positions include Tyr-193, Met-223, 246 to 251 (FGMGII), 267 to 269 (EAH), 294 to 295 (WQ), and Asp-315.

Belongs to the class I-like SAM-binding methyltransferase superfamily. RMT2 methyltransferase family. In terms of assembly, monomer.

The protein localises to the cytoplasm. It is found in the nucleus. Its function is as follows. S-adenosyl-L-methionine-dependent protein-arginine N-methyltransferase that methylates the delta-nitrogen atom of arginine residues to form N5-methylarginine (type IV) in target proteins. Monomethylates ribosomal protein L12. The polypeptide is Protein arginine N-methyltransferase 2 (Kluyveromyces lactis (strain ATCC 8585 / CBS 2359 / DSM 70799 / NBRC 1267 / NRRL Y-1140 / WM37) (Yeast)).